Here is a 497-residue protein sequence, read N- to C-terminus: Angiopoietin-1 (497 aa).

The signal sequence occupies residues 1–15 (MTVFLSFAFLAAILT). Residues asparagine 92, asparagine 122, asparagine 154, asparagine 243, and asparagine 294 are each glycosylated (N-linked (GlcNAc...) asparagine). Residues 153-261 (LNQTSRLEIQ…LELMDTVHNL (109 aa)) adopt a coiled-coil conformation. The 221-residue stretch at 276-496 (KEEEKPFRDC…STTMMIRPLD (221 aa)) folds into the Fibrinogen C-terminal domain. Cystine bridges form between cysteine 285-cysteine 314 and cysteine 438-cysteine 451.

In terms of assembly, homooligomer. Interacts with TEK/TIE2. Interacts with SVEP1/polydom. Interacts with THBD; this interaction significantly inhibits the generation of activated PC and TAFIa/CPB2 by the thrombin/thrombomodulin complex.

The protein resides in the secreted. Functionally, binds and activates TIE2 receptor by inducing its tyrosine phosphorylation. Implicated in endothelial developmental processes later and distinct from that of VEGF. Appears to play a crucial role in mediating reciprocal interactions between the endothelium and surrounding matrix and mesenchyme. Mediates blood vessel maturation/stability. It may play an important role in the heart early development. The protein is Angiopoietin-1 (ANGPT1) of Bos taurus (Bovine).